The following is a 149-amino-acid chain: NPC intracellular cholesterol transporter 2 (149 aa).

The N-terminal stretch at 1 to 21 (MRLLVAAFLLLALGDLGPGGA) is a signal peptide. Cystine bridges form between Cys-27–Cys-140, Cys-42–Cys-47, and Cys-93–Cys-99. An N-linked (GlcNAc...) asparagine glycan is attached at Asn-58. Lys-116 carries the N6-acetyllysine modification.

The protein belongs to the NPC2 family. In terms of assembly, interacts with NPC1 (via the second lumenal domain) in a cholestrol-dependent manner. Interacts with NUS1/NgBR, the interaction stabilizes NCP2 and regulates cholesterol trafficking. Interacts with DHDDS. Interacts with NEDD4L (via C2 domain). Interacts with NPC1L1. In terms of tissue distribution, epididymis. High levels are found in the caput and corpus regions. Weaker levels in the distal cauda and in the efferent ducts.

The protein localises to the secreted. Its subcellular location is the endoplasmic reticulum. It is found in the lysosome. It carries out the reaction cholesterol(in) = cholesterol(out). Its function is as follows. Intracellular cholesterol transporter which acts in concert with NPC1 and plays an important role in the egress of cholesterol from the lysosomal compartment. Unesterified cholesterol that has been released from LDLs in the lumen of the late endosomes/lysosomes is transferred by NPC2 to the cholesterol-binding pocket in the N-terminal domain of NPC1. May bind and mobilize cholesterol that is associated with membranes. NPC2 binds cholesterol with a 1:1 stoichiometry. Can bind a variety of sterols, including lathosterol, desmosterol and the plant sterols stigmasterol and beta-sitosterol. The secreted form of NCP2 regulates biliary cholesterol secretion via stimulation of ABCG5/ABCG8-mediated cholesterol transport. The sequence is that of NPC intracellular cholesterol transporter 2 from Canis lupus familiaris (Dog).